A 92-amino-acid polypeptide reads, in one-letter code: Phospholemman (92 aa).

Positions 1-20 are cleaved as a signal peptide; the sequence is MAPLHHILVLCVGFLTTATA. Topologically, residues 21–35 are extracellular; the sequence is EAPQEHDPFTYDYQS. A helical membrane pass occupies residues 36 to 56; the sequence is LRIGGLIIAGILFILGILIVL. Residues 57 to 92 are Cytoplasmic-facing; the sequence is SRRCRCKFNQQQRTGEPDEEEGTFRSSIRRLSTRRR. Cys60 carries S-palmitoyl cysteine lipidation. Cys62 carries the S-glutathionyl cysteine; alternate modification. Residue Cys62 is the site of S-palmitoyl cysteine; alternate attachment. The interval 65–92 is disordered; sequence NQQQRTGEPDEEEGTFRSSIRRLSTRRR. Position 79 is a phosphothreonine (Thr79). Residue Ser82 is modified to Phosphoserine. A phosphoserine; by PKA and PKC mark is found at Ser83 and Ser88. Residues 83–92 are compositionally biased toward basic residues; sequence SIRRLSTRRR. Thr89 bears the Phosphothreonine; by PKC mark.

The protein belongs to the FXYD family. Homotetramer. Monomer. Regulatory subunit of the sodium/potassium-transporting ATPase (NKA) which is composed of a catalytic alpha subunit, a non-catalytic beta subunit and an additional regulatory subunit. The monomeric form associates with NKA while the oligomeric form does not. Interacts with the catalytic alpha-1 subunit ATP1A1. Also interacts with the catalytic alpha-2 and alpha-3 subunits ATP1A2 and ATP1A3. Very little interaction with the alpha subunits ATP1A1, ATP1A2 or ATP1A3 when phosphorylated at Ser-83. Interacts with non-catalytic beta-1 subunit ATP1B1. Oxidative stress decreases interaction with ATP1A1 but increases interaction with ATP1B1. Post-translationally, major plasma membrane substrate for cAMP-dependent protein kinase (PKA) and protein kinase C (PKC) in several different tissues. Phosphorylated in response to insulin and adrenergic stimulation. Phosphorylation at Ser-88 stimulates sodium/potassium-transporting ATPase activity while the unphosphorylated form inhibits sodium/potassium-transporting ATPase activity. Phosphorylation increases tetramerization, decreases binding to ATP1A1 and reduces inhibition of ATP1A1 activity. Phosphorylation at Ser-83 leads to greatly reduced interaction with ATP1A1, ATP1A2 and ATP1A3. May be phosphorylated by DMPK. Palmitoylation increases half-life and stability and is enhanced upon phosphorylation at Ser-88 by PKA. As to expression, present in heart, esophagus, stomach, aorta, skeletal muscle, smooth muscle, and liver but absent from brain and kidney.

The protein resides in the cell membrane. The protein localises to the sarcolemma. It is found in the apical cell membrane. Its subcellular location is the membrane. It localises to the caveola. The protein resides in the T-tubule. Functionally, associates with and regulates the activity of the sodium/potassium-transporting ATPase (NKA) which transports Na(+) out of the cell and K(+) into the cell. Inhibits NKA activity in its unphosphorylated state and stimulates activity when phosphorylated. Reduces glutathionylation of the NKA beta-1 subunit ATP1B1, thus reversing glutathionylation-mediated inhibition of ATP1B1. Contributes to female sexual development by maintaining the excitability of neurons which secrete gonadotropin-releasing hormone. This chain is Phospholemman, found in Canis lupus familiaris (Dog).